A 426-amino-acid polypeptide reads, in one-letter code: Cytochrome c biogenesis protein CcsB (426 aa).

A run of 3 helical transmembrane segments spans residues 14–34, 72–92, and 162–182; these read LKIAILLLLVIAVSCAAGTLI, SFWFLFLLIWLGLALSVCSFR, and LGPILIHLGMILLMIGATYGS.

The protein belongs to the Ccs1/CcsB family. May interact with CcsA.

It localises to the cellular thylakoid membrane. In terms of biological role, required during biogenesis of c-type cytochromes (cytochrome c6 and cytochrome f) at the step of heme attachment. This is Cytochrome c biogenesis protein CcsB from Prochlorococcus marinus (strain NATL2A).